Consider the following 68-residue polypeptide: uncharacterized protein (68 aa).

The signal sequence occupies residues Met1 to Ala21.

This is an uncharacterized protein from Escherichia coli O157:H7.